The following is a 338-amino-acid chain: Phosphate transport system permease protein PstC 1 (338 aa).

A run of 8 helical transmembrane segments spans residues 19 to 39 (GGIGAVIPLLALVLVLVVLVI), 93 to 113 (TSAIALIIAVPVSVGAALVIV), 123 to 143 (AVGIVLELLAGIPSVVVGLWG), 144 to 164 (AMTFGPFIAHHIAPVIAHNAP), 181 to 201 (GMLVSGLVLAVMVVPIIATTT), 232 to 252 (LPWVSSGIVGAVVLGLGRALG), 254 to 274 (TMAVAMVSGAVLGAMPANIYA), and 295 to 315 (TNFAVKTLAEVGLVLMVITLL). One can recognise an ABC transmembrane type-1 domain in the interval 87 to 320 (IVGTLATSAI…VITLLTNVAA (234 aa)).

The protein belongs to the binding-protein-dependent transport system permease family. CysTW subfamily.

The protein resides in the cell membrane. Functionally, part of the binding-protein-dependent transport system for phosphate; probably responsible for the translocation of the substrate across the membrane. This Mycobacterium bovis (strain ATCC BAA-935 / AF2122/97) protein is Phosphate transport system permease protein PstC 1 (pstC1).